Consider the following 385-residue polypeptide: A-type ATP synthase subunit C (385 aa).

Belongs to the V-ATPase V0D/AC39 subunit family. In terms of assembly, has multiple subunits with at least A(3), B(3), C, D, E, F, H, I and proteolipid K(x).

The protein resides in the cell membrane. In terms of biological role, component of the A-type ATP synthase that produces ATP from ADP in the presence of a proton gradient across the membrane. The chain is A-type ATP synthase subunit C from Methanosphaera stadtmanae (strain ATCC 43021 / DSM 3091 / JCM 11832 / MCB-3).